Consider the following 318-residue polypeptide: Ribosomal RNA small subunit methyltransferase H (318 aa).

S-adenosyl-L-methionine contacts are provided by residues 38-40 (AGH), D57, L91, D105, and Q112.

Belongs to the methyltransferase superfamily. RsmH family.

It localises to the cytoplasm. The catalysed reaction is cytidine(1402) in 16S rRNA + S-adenosyl-L-methionine = N(4)-methylcytidine(1402) in 16S rRNA + S-adenosyl-L-homocysteine + H(+). Functionally, specifically methylates the N4 position of cytidine in position 1402 (C1402) of 16S rRNA. In Clavibacter sepedonicus (Clavibacter michiganensis subsp. sepedonicus), this protein is Ribosomal RNA small subunit methyltransferase H.